We begin with the raw amino-acid sequence, 113 residues long: Ferredoxin-1 (113 aa).

4Fe-4S ferredoxin-type domains are found at residues 2 to 30 and 31 to 60; these read TYIV…YEGE and NFLV…PDTE. 2 residues coordinate [3Fe-4S] cluster: Cys-9 and Cys-17. [4Fe-4S] cluster-binding residues include Cys-21, Cys-40, Cys-43, and Cys-46. Cys-50 serves as a coordination point for [3Fe-4S] cluster.

[4Fe-4S] cluster is required as a cofactor. The cofactor is [3Fe-4S] cluster.

The chain is Ferredoxin-1 (fdxA) from Caulobacter vibrioides (strain ATCC 19089 / CIP 103742 / CB 15) (Caulobacter crescentus).